The primary structure comprises 213 residues: Large ribosomal subunit protein uL3 (213 aa).

It belongs to the universal ribosomal protein uL3 family. As to quaternary structure, part of the 50S ribosomal subunit. Forms a cluster with proteins L14 and L19.

Functionally, one of the primary rRNA binding proteins, it binds directly near the 3'-end of the 23S rRNA, where it nucleates assembly of the 50S subunit. This is Large ribosomal subunit protein uL3 from Kosmotoga olearia (strain ATCC BAA-1733 / DSM 21960 / TBF 19.5.1).